The primary structure comprises 514 residues: 2-isopropylmalate synthase (514 aa).

Residues 5–268 enclose the Pyruvate carboxyltransferase domain; it reads LIIFDTTLRD…DVGIDTTQIV (264 aa). Positions 14, 202, 204, and 239 each coordinate Mn(2+). Residues 395–514 are regulatory domain; that stretch reads KFVSLSQRSE…KDDKLNPQRA (120 aa).

It belongs to the alpha-IPM synthase/homocitrate synthase family. LeuA type 1 subfamily. Homodimer. It depends on Mn(2+) as a cofactor.

It is found in the cytoplasm. It catalyses the reaction 3-methyl-2-oxobutanoate + acetyl-CoA + H2O = (2S)-2-isopropylmalate + CoA + H(+). Its pathway is amino-acid biosynthesis; L-leucine biosynthesis; L-leucine from 3-methyl-2-oxobutanoate: step 1/4. Catalyzes the condensation of the acetyl group of acetyl-CoA with 3-methyl-2-oxobutanoate (2-ketoisovalerate) to form 3-carboxy-3-hydroxy-4-methylpentanoate (2-isopropylmalate). The chain is 2-isopropylmalate synthase from Burkholderia cenocepacia (strain HI2424).